The sequence spans 340 residues: Heat-inducible transcription repressor HrcA (340 aa).

It belongs to the HrcA family.

In terms of biological role, negative regulator of class I heat shock genes (grpE-dnaK-dnaJ and groELS operons). Prevents heat-shock induction of these operons. The protein is Heat-inducible transcription repressor HrcA of Burkholderia ambifaria (strain MC40-6).